Here is a 439-residue protein sequence, read N- to C-terminus: AT-hook motif nuclear-localized protein 13 (439 aa).

3 disordered regions span residues 1–46 (MDSR…NSYN), 69–216 (QRLP…LGGT), and 342–439 (GRKQ…NSPQ). Low complexity-rich tracts occupy residues 9–31 (QQQQQQQQQQQQQQQQQHLQQQQ) and 79–95 (PHQPQQHQYHHPQPQQQ). Residues 109-120 (SPSSVAATQQHS) show a composition bias toward polar residues. The span at 130-139 (VKKKRGRPRK) shows a compositional bias: basic residues. Residues 131-139 (KKKRGRPRK) carry the Bipartite nuclear localization signal motif. The segment at residues 131 to 143 (KKKRGRPRKYAAD) is a DNA-binding region (a.T hook 1). Gly residues-rich tracts occupy residues 143–152 (DGGGGGGGGS) and 171–183 (YGGGNEGGGGGDS). The segment at residues 196–208 (KRNRGRPPGSGKK) is a DNA-binding region (a.T hook 2). The PPC domain maps to 217 to 359 (GGVGFTPHVI…GRAQNTPEPA (143 aa)). Polar residues predominate over residues 347 to 357 (QSAGRAQNTPE). 2 stretches are compositionally biased toward low complexity: residues 376 to 386 (SPRSQGQQHSS) and 403 to 416 (NNNNSNNHGIFGNS). Positions 428–439 (MYQNLWPGNSPQ) are enriched in polar residues.

Its subcellular location is the nucleus. In terms of biological role, transcription factor that specifically binds AT-rich DNA sequences related to the nuclear matrix attachment regions (MARs). This chain is AT-hook motif nuclear-localized protein 13, found in Arabidopsis thaliana (Mouse-ear cress).